A 495-amino-acid polypeptide reads, in one-letter code: MIPVIALVGRPNVGKSTLFNRLTHTRDALVADFPGLTRDRKYGRAEVEGHEFIVVDTGGIDGTEDGVETKMAGQSLLAIEEADIVLFMVDARAGLMPADQGIAQHLRSREKATFLVANKTDGIDPDTATADFYSLGLGEVHAIAASHGRGVTQLIEDVMAPYMDAEEPEVELTEEEENAAYWAEQEAQGEDVPPEDPEDDFDPRTLPIKLAIVGRPNVGKSTLTNRILGEDRVVVYDMPGTTRDSIYIPMTRDDREYILIDTAGVRKRGKITETVEKFSVIKTLQAIEDSNVVLLVIDARDGISDQDLSLLGFILNSGRSLVIAVNKWDGMTEEARAQVKDMLDLRLGFVDFARIHFISALHGSGVGNLFESVQEAYDCSTKRVGTSLLTRIMQMAEEDHQPPLVRGRRVKLKYAHAGGYNPPIVVIHGNQVTDLSDSYKRYLMNYFRRSLKVMGTPIRIQFKEGENPFAGKRNPLTPNQMRKRKRLMSHLKKGK.

2 EngA-type G domains span residues 3–166 (PVIA…MDAE) and 208–381 (IKLA…DCST). GTP is bound by residues 9–16 (GRPNVGKS), 56–60 (DTGGI), 118–121 (NKTD), 214–221 (GRPNVGKS), 261–265 (DTAGV), and 326–329 (NKWD). Residues 382–466 (KRVGTSLLTR…PIRIQFKEGE (85 aa)) enclose the KH-like domain.

Belongs to the TRAFAC class TrmE-Era-EngA-EngB-Septin-like GTPase superfamily. EngA (Der) GTPase family. In terms of assembly, associates with the 50S ribosomal subunit.

In terms of biological role, GTPase that plays an essential role in the late steps of ribosome biogenesis. The protein is GTPase Der of Yersinia pseudotuberculosis serotype O:3 (strain YPIII).